The following is a 1238-amino-acid chain: uncharacterized protein (1238 aa).

Disordered regions lie at residues 1 to 38 (MSSK…DISS), 122 to 156 (SSTP…RPSF), 229 to 439 (PKNN…KNKE), 660 to 1016 (KNKL…TGAA), 1051 to 1083 (EEED…KLNS), and 1098 to 1191 (KKSG…NASR). 3 stretches are compositionally biased toward low complexity: residues 10 to 26 (NKNN…NNNN), 129 to 149 (LSPF…QSPL), and 234 to 276 (QIDS…TQSQ). The segment covering 317-343 (ELQNQTQINKSKQDLTNISQKINITTS) has biased composition (polar residues). Residues 344-361 (QHDKDDLGEYRMSEKGGG) show a composition bias toward basic and acidic residues. Positions 362–372 (DDGDDDDDYDN) are enriched in acidic residues. Basic residues predominate over residues 383-394 (TNKKQQQQHHHK). Over residues 395–416 (GKEESQSEYYEKEKEKEKEDIA) the composition is skewed to basic and acidic residues. 3 stretches are compositionally biased toward low complexity: residues 417–435 (TTRA…NNIN), 678–691 (QQQQ…QQQE), and 712–792 (QPSQ…QEKQ). Positions 793–805 (QSQEKHQSQEKHQ) are enriched in basic and acidic residues. Low complexity-rich tracts occupy residues 806 to 859 (SQQS…SQQK) and 882 to 906 (SQSQ…QSQR). The segment covering 916 to 927 (ENQDSENLDDTV) has biased composition (acidic residues). A compositionally biased stretch (polar residues) spans 929–944 (MNYNQIPSTLDHSTLQ). A compositionally biased stretch (basic and acidic residues) spans 966-975 (EIERRRRELA). The segment covering 976-990 (GEDSDEEFEILDEDQ) has biased composition (acidic residues). Composition is skewed to low complexity over residues 1062–1083 (QNNN…KLNS) and 1108–1121 (SSSS…NKKN). Over residues 1123–1133 (PQPTKSVNKPR) the composition is skewed to polar residues. Residues 1142-1181 (SQNRQKQSEQQQQQPQQQPQLPQQQQQQQQQQQLRQQQNE) show a composition bias toward low complexity. Positions 1182-1191 (NTISSLNASR) are enriched in polar residues.

This is an uncharacterized protein from Dictyostelium discoideum (Social amoeba).